Reading from the N-terminus, the 151-residue chain is MKRSTTDSDLAGDAHNETNKKMKSTEEEEIGFSNLDENLVYEVLKHVDAKTLAMSSCVSKIWHKTAQDERLWELICTRHWTNIGCGQNQLRSVVLALGGFRRLHSLYLWPLSKPNPRARFGKDELKLTLSLLSIRYYEKMSFTKRPLPESK.

The segment covering 1–25 (MKRSTTDSDLAGDAHNETNKKMKST) has biased composition (basic and acidic residues). Positions 1 to 27 (MKRSTTDSDLAGDAHNETNKKMKSTEE) are disordered. Residues 29–75 (EIGFSNLDENLVYEVLKHVDAKTLAMSSCVSKIWHKTAQDERLWELI) form the F-box domain.

Part of some SCF(GID2) complex, which consist of SKP1B, CUL1 cullin, GID2/SLY1 and some RING box protein. Interacts directly with SKP1A and SKP1B. Interacts directly with DELLA proteins GAI, RGA, RGL1, RGL3 and probably RGL2. May have a higher affinity for phosphorylated DELLA proteins. In terms of tissue distribution, expressed in all tissues tested, including rosette leaves, green siliques, flowers, stems, cauline leaves and seedlings.

The protein resides in the nucleus. The protein operates within protein modification; protein ubiquitination. In terms of biological role, essential component of the SCF-type E3 ligase complex, SCF(GID2), a complex that positively regulates the gibberellin signaling pathway. Upon gibberellin treatment, the SCF(GID2) complex mediates the ubiquitination and subsequent degradation of DELLA proteins (GAI, RGA and RGL2), some repressors of the gibberellin pathway, leading to activate the pathway. The protein is F-box protein GID2 (GID2) of Arabidopsis thaliana (Mouse-ear cress).